The sequence spans 1055 residues: cAMP and cAMP-inhibited cGMP 3',5'-cyclic phosphodiesterase 10A (1055 aa).

Disordered regions lie at residues Met-1–Gly-90, Ala-151–Arg-193, and Leu-205–Gly-250. Gly residues-rich tracts occupy residues Gly-79 to Gly-90 and Ala-154 to Gln-168. Over residues Pro-220–Pro-231 the composition is skewed to low complexity. Residues Gly-232 to Gln-243 are compositionally biased toward gly residues. A Phosphothreonine modification is found at Thr-282. 2 consecutive GAF domains span residues Asp-367–Ile-510 and Ala-542–Leu-688. Residues Arg-562–Cys-563, Ile-606–Ala-607, Thr-640, Gln-659, and His-791 contribute to the 3',5'-cyclic AMP site. One can recognise a PDEase domain in the interval Thr-718–Glu-1035. The Proton donor role is filled by His-791. His-791 serves as a coordination point for 3',5'-cyclic GMP. A divalent metal cation-binding residues include His-795, His-829, Asp-830, and Asp-940. Gln-992 lines the 3',5'-cyclic AMP pocket. Gln-992 contacts 3',5'-cyclic GMP.

The protein belongs to the cyclic nucleotide phosphodiesterase family. Homodimer. A divalent metal cation is required as a cofactor. In terms of processing, phosphorylated on Thr-16. In terms of tissue distribution, abundant in the putamen and caudate nucleus regions of brain and testis, moderately expressed in the thyroid gland, pituitary gland, thalamus and cerebellum.

The protein resides in the cytoplasm. It localises to the cytosol. It carries out the reaction a nucleoside 3',5'-cyclic phosphate + H2O = a nucleoside 5'-phosphate + H(+). It catalyses the reaction 3',5'-cyclic AMP + H2O = AMP + H(+). The catalysed reaction is 3',5'-cyclic GMP + H2O = GMP + H(+). Its pathway is purine metabolism; 3',5'-cyclic AMP degradation; AMP from 3',5'-cyclic AMP: step 1/1. It functions in the pathway purine metabolism; 3',5'-cyclic GMP degradation; GMP from 3',5'-cyclic GMP: step 1/1. Its activity is regulated as follows. Inhibited by dipyridamole and moderately by IBMX. cGMP acts as an allosteric activator. In terms of biological role, plays a role in signal transduction by regulating the intracellular concentration of cyclic nucleotides. Can hydrolyze both cAMP and cGMP, but has higher affinity for cAMP and is more efficient with cAMP as substrate. May play a critical role in regulating cAMP and cGMP levels in the striatum, a region of the brain that contributes to the control of movement and cognition. The polypeptide is cAMP and cAMP-inhibited cGMP 3',5'-cyclic phosphodiesterase 10A (PDE10A) (Homo sapiens (Human)).